Here is a 446-residue protein sequence, read N- to C-terminus: Methanogenesis regulatory protein FilR1 (446 aa).

In terms of domain architecture, Response regulatory spans 297–416 (DVMIVEDDLG…QRLPEIAEEA (120 aa)). Asp350 is modified (4-aspartylphosphate).

Phosphorylated by FilI.

In terms of biological role, member of the two-component regulatory system FilI/FilRs, which is involved in the regulation of methanogenesis. Regulates its own expression, expression of the filI-filR2 operon, and of genes involved in methanogenesis such as acs1, acs4 and mtrABC. Acts by binding to the promoters. This is Methanogenesis regulatory protein FilR1 from Methanothrix harundinacea (strain 6Ac) (Methanosaeta harundinacea).